The sequence spans 461 residues: Cysteine--tRNA ligase (461 aa).

Cys28 provides a ligand contact to Zn(2+). Positions 30–40 (ITVYDLCHIGH) match the 'HIGH' region motif. Residues Cys209, His234, and Glu238 each contribute to the Zn(2+) site. Positions 266–270 (KMSKS) match the 'KMSKS' region motif. ATP is bound at residue Lys269.

Belongs to the class-I aminoacyl-tRNA synthetase family. As to quaternary structure, monomer. Zn(2+) serves as cofactor.

The protein resides in the cytoplasm. It carries out the reaction tRNA(Cys) + L-cysteine + ATP = L-cysteinyl-tRNA(Cys) + AMP + diphosphate. This chain is Cysteine--tRNA ligase, found in Escherichia coli O17:K52:H18 (strain UMN026 / ExPEC).